A 98-amino-acid polypeptide reads, in one-letter code: Defensin-A1 (98 aa).

The signal sequence occupies residues Met-1–Ala-19. Positions Gln-20–Leu-62 are excised as a propeptide. 3 disulfides stabilise this stretch: Cys-67-Cys-94, Cys-69-Cys-83, and Cys-73-Cys-93. Positions Ile-97–Lys-98 are excised as a propeptide.

This sequence belongs to the alpha-defensin family. Highly expressed in intestine, and expressed at lower levels in lung and spleen.

The protein resides in the secreted. In terms of biological role, has antimicrobial activity. The protein is Defensin-A1 of Ornithorhynchus anatinus (Duckbill platypus).